Consider the following 214-residue polypeptide: Guanylate kinase (214 aa).

In terms of domain architecture, Guanylate kinase-like spans 6-192 (GTLYIISAPS…ALEDLKSIFR (187 aa)). 13-20 (APSGAGKT) is a binding site for ATP.

Belongs to the guanylate kinase family.

It is found in the cytoplasm. The enzyme catalyses GMP + ATP = GDP + ADP. Functionally, essential for recycling GMP and indirectly, cGMP. In Pseudomonas syringae pv. tomato (strain ATCC BAA-871 / DC3000), this protein is Guanylate kinase.